Reading from the N-terminus, the 327-residue chain is o-succinylbenzoate synthase (327 aa).

Residue K110 is the Proton donor of the active site. Mg(2+) is bound by residues D138, E165, and D188. The active-site Proton acceptor is the K212.

Belongs to the mandelate racemase/muconate lactonizing enzyme family. MenC type 1 subfamily. A divalent metal cation is required as a cofactor.

The enzyme catalyses (1R,6R)-6-hydroxy-2-succinyl-cyclohexa-2,4-diene-1-carboxylate = 2-succinylbenzoate + H2O. Its pathway is quinol/quinone metabolism; 1,4-dihydroxy-2-naphthoate biosynthesis; 1,4-dihydroxy-2-naphthoate from chorismate: step 4/7. The protein operates within quinol/quinone metabolism; menaquinone biosynthesis. In terms of biological role, converts 2-succinyl-6-hydroxy-2,4-cyclohexadiene-1-carboxylate (SHCHC) to 2-succinylbenzoate (OSB). This is o-succinylbenzoate synthase from Mycobacterium marinum (strain ATCC BAA-535 / M).